Reading from the N-terminus, the 87-residue chain is UPF0250 protein BCc_307 (87 aa).

It belongs to the UPF0250 family.

The chain is UPF0250 protein BCc_307 from Buchnera aphidicola subsp. Cinara cedri (strain Cc).